A 186-amino-acid polypeptide reads, in one-letter code: Temperature-induced lipocalin-1 (186 aa).

The HPR (Hydrophobic proline-rich) motif lies at 90 to 97 (PPFLPIIP). Residues 154-174 (KLHKTPQSDTPPESNTAPEDS) are disordered. A compositionally biased stretch (polar residues) spans 158-171 (TPQSDTPPESNTAP).

This sequence belongs to the calycin superfamily. Lipocalin family. As to expression, expressed ubiquitously at similar levels, except in dry seeds (at protein level). Present in seeds.

Its subcellular location is the cell membrane. It localises to the cytoplasm. The protein localises to the plastid. It is found in the chloroplast membrane. Its function is as follows. Involved in basal (BT) and acquired thermotolerance (AT), probably by preventing plasma membrane lipids peroxidation induced by severe heat-shock (HS). Lipocalin that confers protection against oxidative stress caused by heat, freezing, paraquat and light. Confers resistance to high salt (NaCl) levels, probably by protecting chloroplasts from ion toxicity via ion homeostasis maintenance. Required for seed longevity by ensuring polyunsaturated lipids integrity. The sequence is that of Temperature-induced lipocalin-1 from Arabidopsis thaliana (Mouse-ear cress).